Reading from the N-terminus, the 121-residue chain is Large ribosomal subunit protein uL18 (121 aa).

It belongs to the universal ribosomal protein uL18 family. Part of the 50S ribosomal subunit; part of the 5S rRNA/L5/L18/L25 subcomplex. Contacts the 5S and 23S rRNAs.

In terms of biological role, this is one of the proteins that bind and probably mediate the attachment of the 5S RNA into the large ribosomal subunit, where it forms part of the central protuberance. This chain is Large ribosomal subunit protein uL18, found in Herpetosiphon aurantiacus (strain ATCC 23779 / DSM 785 / 114-95).